A 174-amino-acid chain; its full sequence is Shikimate kinase (174 aa).

15 to 20 (GTGKST) is a binding site for ATP. Residue serine 19 participates in Mg(2+) binding. Substrate is bound by residues aspartate 37, arginine 61, and glycine 82. Residue arginine 120 participates in ATP binding. Residue arginine 138 coordinates substrate.

Belongs to the shikimate kinase family. As to quaternary structure, monomer. Requires Mg(2+) as cofactor.

It localises to the cytoplasm. The catalysed reaction is shikimate + ATP = 3-phosphoshikimate + ADP + H(+). The protein operates within metabolic intermediate biosynthesis; chorismate biosynthesis; chorismate from D-erythrose 4-phosphate and phosphoenolpyruvate: step 5/7. Its function is as follows. Catalyzes the specific phosphorylation of the 3-hydroxyl group of shikimic acid using ATP as a cosubstrate. The protein is Shikimate kinase of Staphylococcus aureus (strain Mu3 / ATCC 700698).